A 136-amino-acid polypeptide reads, in one-letter code: Histone H3.3C (136 aa).

Positions 1–44 (MARTKQTARKSTGGKAPRKQLVTKAARKSAPSTGGMKKPHRYRP) are disordered. Position 3 is an asymmetric dimethylarginine; by PRMT6; alternate (R3). R3 carries the post-translational modification Citrulline; alternate. Position 4 is a phosphothreonine; by HASPIN (T4). At K5 the chain carries Allysine; alternate. N6,N6,N6-trimethyllysine; alternate is present on K5. K5 is subject to N6,N6-dimethyllysine; alternate. Residue K5 is modified to N6-(2-hydroxyisobutyryl)lysine; alternate. The residue at position 5 (K5) is an N6-(beta-hydroxybutyryl)lysine; alternate. K5 carries the N6-acetyllysine; alternate modification. K5 is subject to N6-methyllysine; alternate. 5-glutamyl dopamine; alternate is present on Q6. A 5-glutamyl serotonin; alternate modification is found at Q6. Position 7 is a phosphothreonine; by PKC (T7). R9 bears the Symmetric dimethylarginine mark. K10 bears the N6,N6,N6-trimethyllysine; alternate mark. N6,N6-dimethyllysine; alternate is present on K10. K10 is modified (N6-(2-hydroxyisobutyryl)lysine; alternate). K10 carries the post-translational modification N6-(beta-hydroxybutyryl)lysine; alternate. K10 carries the N6-acetyllysine; alternate modification. An N6-methyllysine; alternate modification is found at K10. At K10 the chain carries N6-lactoyllysine; alternate. S11 is subject to ADP-ribosylserine; alternate. S11 is modified (phosphoserine; alternate; by AURKB, AURKC, RPS6KA3, RPS6KA4 and RPS6KA5). T12 is modified (phosphothreonine; by PKC). K15 carries the N6-(2-hydroxyisobutyryl)lysine; alternate modification. K15 carries the N6-(beta-hydroxybutyryl)lysine; alternate modification. The residue at position 15 (K15) is an N6-acetyllysine; alternate. K15 carries the N6-lactoyllysine; alternate modification. Residue K15 is modified to N6-glutaryllysine; alternate. The residue at position 15 (K15) is an N6-succinyllysine; alternate. R18 is subject to Asymmetric dimethylarginine. Residues K19 and K24 each carry the N6-(2-hydroxyisobutyryl)lysine; alternate modification. An N6-(beta-hydroxybutyryl)lysine; alternate mark is found at K19 and K24. An N6-acetyllysine; alternate mark is found at K19 and K24. Residues K19 and K24 each carry the N6-methyllysine; alternate modification. 2 positions are modified to N6-lactoyllysine; alternate: K19 and K24. Residues K19 and K24 each carry the N6-glutaryllysine; alternate modification. N6-butyryllysine; alternate occurs at positions 19 and 24. The residue at position 27 (R27) is a Citrulline. Residue K28 is modified to N6,N6,N6-trimethyllysine; alternate. K28 is subject to N6,N6-dimethyllysine; alternate. An N6-(2-hydroxyisobutyryl)lysine; alternate modification is found at K28. The residue at position 28 (K28) is an N6-acetyllysine; alternate. K28 carries the post-translational modification N6-methyllysine; alternate. An N6-lactoyllysine; alternate modification is found at K28. K28 is subject to N6-glutaryllysine; alternate. S29 bears the ADP-ribosylserine; alternate mark. S29 is subject to Phosphoserine; alternate; by AURKB, AURKC and RPS6KA5. Position 32 is a phosphoserine (S32). K37 carries the post-translational modification N6,N6,N6-trimethyllysine; alternate. The residue at position 37 (K37) is an N6,N6-dimethyllysine; alternate. N6-(2-hydroxyisobutyryl)lysine; alternate is present on K37. K37 carries the post-translational modification N6-acetyllysine; alternate. Position 37 is an N6-methyllysine; alternate (K37). The residue at position 38 (K38) is an N6-methyllysine. Y42 carries the post-translational modification Phosphotyrosine. K57 carries the post-translational modification N6,N6,N6-trimethyllysine; alternate. At K57 the chain carries N6-(2-hydroxyisobutyryl)lysine; alternate. K57 carries the post-translational modification N6-(beta-hydroxybutyryl)lysine; alternate. Residue K57 is modified to N6-acetyllysine; alternate. K57 bears the N6-methyllysine; alternate mark. Residue K57 is modified to N6-lactoyllysine; alternate. At K57 the chain carries N6-glutaryllysine; alternate. K57 is modified (N6-succinyllysine; alternate). S58 is modified (phosphoserine). N6-(2-hydroxyisobutyryl)lysine; alternate is present on residues K65 and K80. An N6-methyllysine; alternate mark is found at K65 and K80. K80 bears the N6,N6,N6-trimethyllysine; alternate mark. K80 carries the N6,N6-dimethyllysine; alternate modification. At K80 the chain carries N6-acetyllysine; alternate. K80 is modified (N6-lactoyllysine; alternate). K80 carries the post-translational modification N6-glutaryllysine; alternate. The residue at position 80 (K80) is an N6-succinyllysine; alternate. Residue T81 is modified to Phosphothreonine. S87 carries the post-translational modification Phosphoserine. T108 is subject to Phosphothreonine. An N6-acetyllysine; alternate modification is found at K116. K116 is subject to N6-glutaryllysine; alternate.

This sequence belongs to the histone H3 family. As to quaternary structure, the nucleosome is a histone octamer containing two molecules each of H2A, H2B, H3 and H4 assembled in one H3-H4 heterotetramer and two H2A-H2B heterodimers. The octamer wraps approximately 147 bp of DNA. In terms of processing, acetylation is generally linked to gene activation. Acetylation on Lys-19 (H3K18ac) favors methylation at Arg-18 (H3R17me). Citrullination at Arg-18 by PADI4 impairs methylation and represses transcription. Post-translationally, asymmetric dimethylation at Arg-18 (H3R17me2a) by CARM1 is linked to gene activation. Asymmetric dimethylation at Arg-3 (H3R2me2a) by PRMT6 is linked to gene repression and is mutually exclusive with H3 Lys-5 methylation (H3K4me2 and H3K4me3). H3R2me2a is present at the 3' of genes regardless of their transcription state and is enriched on inactive promoters, while it is absent on active promoters. In terms of processing, methylation at Lys-5 (H3K4me) and Lys-80 (H3K79me) are linked to gene activation. Methylation at Lys-5 (H3K4me) facilitates subsequent acetylation of H3 and H4. Methylation at Lys-80 (H3K79me) is associated with DNA double-strand break (DSB) responses and is a specific target for TP53BP1. Methylation at Lys-10 (H3K9me) and Lys-28 (H3K27me) are linked to gene repression. Methylation at Lys-10 (H3K9me) is a specific target for HP1 proteins (CBX1, CBX3 and CBX5) and prevents subsequent phosphorylation at Ser-11 (H3S10ph) and acetylation of H3 and H4. Methylation at Lys-5 (H3K4me) and Lys-80 (H3K79me) require preliminary monoubiquitination of H2B at 'Lys-120'. Methylation at Lys-10 (H3K9me) and Lys-28 (H3K27me) are enriched in inactive X chromosome chromatin. Monomethylation at Lys-57 (H3K56me1) by EHMT2/G9A in G1 phase promotes interaction with PCNA and is required for DNA replication. Phosphorylated at Thr-4 (H3T3ph) by HASPIN during prophase and dephosphorylated during anaphase. Phosphorylation at Ser-11 (H3S10ph) by AURKB is crucial for chromosome condensation and cell-cycle progression during mitosis and meiosis. In addition phosphorylation at Ser-11 (H3S10ph) by RPS6KA4 and RPS6KA5 is important during interphase because it enables the transcription of genes following external stimulation, like mitogens, stress, growth factors or UV irradiation and result in the activation of genes, such as c-fos and c-jun. Phosphorylation at Ser-11 (H3S10ph), which is linked to gene activation, prevents methylation at Lys-10 (H3K9me) but facilitates acetylation of H3 and H4. Phosphorylation at Ser-11 (H3S10ph) by AURKB mediates the dissociation of HP1 proteins (CBX1, CBX3 and CBX5) from heterochromatin. Phosphorylation at Ser-11 (H3S10ph) is also an essential regulatory mechanism for neoplastic cell transformation. Phosphorylated at Ser-29 (H3S28ph) by MAP3K20 isoform 1, RPS6KA5 or AURKB during mitosis or upon ultraviolet B irradiation. Phosphorylation at Thr-7 (H3T6ph) by PRKCB is a specific tag for epigenetic transcriptional activation that prevents demethylation of Lys-5 (H3K4me) by LSD1/KDM1A. At centromeres, specifically phosphorylated at Thr-12 (H3T11ph) from prophase to early anaphase, by DAPK3 and PKN1. Phosphorylation at Thr-12 (H3T11ph) by PKN1 or isoform M2 of PKM (PKM2) is a specific tag for epigenetic transcriptional activation that promotes demethylation of Lys-10 (H3K9me) by KDM4C/JMJD2C. Phosphorylation at Tyr-42 (H3Y41ph) by JAK2 promotes exclusion of CBX5 (HP1 alpha) from chromatin. Post-translationally, lysine deamination at Lys-5 (H3K4all) to form allysine is mediated by LOXL2. Allysine formation by LOXL2 only takes place on H3K4me3 and results in gene repression. In terms of processing, butyrylation of histones marks active promoters and competes with histone acetylation. It is present during late spermatogenesis. Succinylation at Lys-80 (H3K79succ) by KAT2A takes place with a maximum frequency around the transcription start sites of genes. It gives a specific tag for epigenetic transcription activation. Post-translationally, serine ADP-ribosylation constitutes the primary form of ADP-ribosylation of proteins in response to DNA damage. Serine ADP-ribosylation at Ser-11 (H3S10ADPr) is mutually exclusive with phosphorylation at Ser-11 (H3S10ph) and impairs acetylation at Lys-10 (H3K9ac).

It is found in the nucleus. It localises to the chromosome. In terms of biological role, core component of nucleosome. Nucleosomes wrap and compact DNA into chromatin, limiting DNA accessibility to the cellular machineries which require DNA as a template. Histones thereby play a central role in transcription regulation, DNA repair, DNA replication and chromosomal stability. DNA accessibility is regulated via a complex set of post-translational modifications of histones, also called histone code, and nucleosome remodeling. The protein is Histone H3.3C of Bos taurus (Bovine).